The chain runs to 355 residues: 3-isopropylmalate dehydrogenase (355 aa).

77 to 90 is an NAD(+) binding site; that stretch reads GAKWDNLPREKRPE. Substrate contacts are provided by Arg-97, Arg-107, Arg-135, and Asp-220. 3 residues coordinate Mg(2+): Asp-220, Asp-244, and Asp-248. Residue 277-289 participates in NAD(+) binding; that stretch reads GSAPDIAGQGIAN.

It belongs to the isocitrate and isopropylmalate dehydrogenases family. LeuB type 1 subfamily. In terms of assembly, homodimer. The cofactor is Mg(2+). It depends on Mn(2+) as a cofactor.

Its subcellular location is the cytoplasm. The catalysed reaction is (2R,3S)-3-isopropylmalate + NAD(+) = 4-methyl-2-oxopentanoate + CO2 + NADH. It participates in amino-acid biosynthesis; L-leucine biosynthesis; L-leucine from 3-methyl-2-oxobutanoate: step 3/4. Catalyzes the oxidation of 3-carboxy-2-hydroxy-4-methylpentanoate (3-isopropylmalate) to 3-carboxy-4-methyl-2-oxopentanoate. The product decarboxylates to 4-methyl-2 oxopentanoate. The polypeptide is 3-isopropylmalate dehydrogenase (Sulfurimonas denitrificans (strain ATCC 33889 / DSM 1251) (Thiomicrospira denitrificans (strain ATCC 33889 / DSM 1251))).